Consider the following 882-residue polypeptide: Alanine--tRNA ligase (882 aa).

Residues His-571, His-575, Cys-673, and His-677 each coordinate Zn(2+).

The protein belongs to the class-II aminoacyl-tRNA synthetase family. Zn(2+) serves as cofactor.

It is found in the cytoplasm. The catalysed reaction is tRNA(Ala) + L-alanine + ATP = L-alanyl-tRNA(Ala) + AMP + diphosphate. In terms of biological role, catalyzes the attachment of alanine to tRNA(Ala) in a two-step reaction: alanine is first activated by ATP to form Ala-AMP and then transferred to the acceptor end of tRNA(Ala). Also edits incorrectly charged Ser-tRNA(Ala) and Gly-tRNA(Ala) via its editing domain. The protein is Alanine--tRNA ligase of Stenotrophomonas maltophilia (strain K279a).